The sequence spans 503 residues: Na(+)-translocating NADH-quinone reductase subunit B (503 aa).

Helical transmembrane passes span 55–75 (MMLVVIALFPATFLAIWNSGV), 94–114 (ISGFRSYLSFIFNDIGVFSIL), 120–140 (IFLPLLIISYSVGGVCEVLFA), 161–181 (TLPPTIPYWMAALGIAFGVVV), and 186–206 (FGGTGMNILNPALSGRAFLFF). Threonine 248 carries the FMN phosphoryl threonine modification. 5 helical membrane-spanning segments follow: residues 361 to 381 (TSTFACLLGAIFLVVTGIASW), 387 to 407 (FGIGAFITAWLFKIFSILIVG), 417 to 437 (FFIPAYRQLFLGGLGFGLVFM), 452 to 472 (WIYGLFIGFMTIVIRLINPAY), and 475 to 495 (GVMLAILLGNVFAPLLDYFAV).

This sequence belongs to the NqrB/RnfD family. In terms of assembly, composed of six subunits; NqrA, NqrB, NqrC, NqrD, NqrE and NqrF. It depends on FMN as a cofactor.

The protein localises to the cell inner membrane. The catalysed reaction is a ubiquinone + n Na(+)(in) + NADH + H(+) = a ubiquinol + n Na(+)(out) + NAD(+). NQR complex catalyzes the reduction of ubiquinone-1 to ubiquinol by two successive reactions, coupled with the transport of Na(+) ions from the cytoplasm to the periplasm. NqrA to NqrE are probably involved in the second step, the conversion of ubisemiquinone to ubiquinol. The polypeptide is Na(+)-translocating NADH-quinone reductase subunit B (Chlamydia caviae (strain ATCC VR-813 / DSM 19441 / 03DC25 / GPIC) (Chlamydophila caviae)).